We begin with the raw amino-acid sequence, 653 residues long: Bifunctional lysine-specific demethylase and histidyl-hydroxylase NO66 (653 aa).

Positions M1–S12 are enriched in low complexity. Disordered regions lie at residues M1–A50 and F65–T137. Residues Q13 to T26 are compositionally biased toward polar residues. A Phosphoserine modification is found at S44. The span at S72–K86 shows a compositional bias: low complexity. A Phosphoserine modification is found at S131. Phosphothreonine is present on T137. The residue at position 138 (S138) is a Phosphoserine. The disordered stretch occupies residues A184–D208. Positions N194–D208 are enriched in basic and acidic residues. The region spanning F300–V450 is the JmjC domain. The Fe cation site is built by H351, D353, and H416.

Belongs to the ROX family. NO66 subfamily. Fe(2+) is required as a cofactor.

The protein resides in the nucleus. It carries out the reaction N(6),N(6)-dimethyl-L-lysyl(36)-[histone H3] + 2 2-oxoglutarate + 2 O2 = L-lysyl(36)-[histone H3] + 2 formaldehyde + 2 succinate + 2 CO2. Oxygenase that can act as both a histone lysine demethylase and a ribosomal histidine hydroxylase. Specifically demethylates 'Lys-4' (H3K4me) and 'Lys-36' (H3K36me) of histone H3, thereby playing a central role in histone code. This is Bifunctional lysine-specific demethylase and histidyl-hydroxylase NO66 from Drosophila melanogaster (Fruit fly).